A 182-amino-acid chain; its full sequence is MSRIGKMPIKVPPGVTVDIKGNDVTVKGPKGTLNRTFRPEVTITRDGDYLVVAPVGTDKAARSFFGLSRTLLDNMIVGVKDGFDKNLEIVGVGMRADKDGNNIIFKVGYSHTVTVAPPAGITLSVDGTTKVKVSGINKEEVSQMAAEIRSIRKPDHYMGKGIRYAGEYVRIKPGKAIGKGAK.

It belongs to the universal ribosomal protein uL6 family. Part of the 50S ribosomal subunit.

In terms of biological role, this protein binds to the 23S rRNA, and is important in its secondary structure. It is located near the subunit interface in the base of the L7/L12 stalk, and near the tRNA binding site of the peptidyltransferase center. The protein is Large ribosomal subunit protein uL6 of Dehalococcoides mccartyi (strain ATCC BAA-2266 / KCTC 15142 / 195) (Dehalococcoides ethenogenes (strain 195)).